The primary structure comprises 413 residues: Imidazolonepropionase (413 aa).

2 residues coordinate Fe(3+): H77 and H79. Positions 77 and 79 each coordinate Zn(2+). 3 residues coordinate 4-imidazolone-5-propanoate: R86, Y149, and H182. Y149 provides a ligand contact to N-formimidoyl-L-glutamate. H247 serves as a coordination point for Fe(3+). A Zn(2+)-binding site is contributed by H247. Q250 is a 4-imidazolone-5-propanoate binding site. D322 contributes to the Fe(3+) binding site. D322 is a binding site for Zn(2+). N-formimidoyl-L-glutamate-binding residues include N324 and G326. Residue T327 participates in 4-imidazolone-5-propanoate binding.

The protein belongs to the metallo-dependent hydrolases superfamily. HutI family. Zn(2+) serves as cofactor. It depends on Fe(3+) as a cofactor.

It is found in the cytoplasm. It catalyses the reaction 4-imidazolone-5-propanoate + H2O = N-formimidoyl-L-glutamate. It participates in amino-acid degradation; L-histidine degradation into L-glutamate; N-formimidoyl-L-glutamate from L-histidine: step 3/3. Catalyzes the hydrolytic cleavage of the carbon-nitrogen bond in imidazolone-5-propanoate to yield N-formimidoyl-L-glutamate. It is the third step in the universal histidine degradation pathway. This chain is Imidazolonepropionase, found in Chromobacterium violaceum (strain ATCC 12472 / DSM 30191 / JCM 1249 / CCUG 213 / NBRC 12614 / NCIMB 9131 / NCTC 9757 / MK).